We begin with the raw amino-acid sequence, 576 residues long: uncharacterized protein (576 aa).

The protein belongs to the chlamydial CPn_0065/CT_288/TC_0561 family.

This is an uncharacterized protein from Chlamydia pneumoniae (Chlamydophila pneumoniae).